Here is a 153-residue protein sequence, read N- to C-terminus: Calmodulin-like protein 4 (153 aa).

4 consecutive EF-hand domains span residues 8-43 (DAIQKFKECFSLYDKKGKGKIPAGDLLTVMRCLGTC), 44-79 (PTPGEVTRHLQVHKIGKDGEVDFSTFLTIMYRQQKQ), 81-116 (DPENEIMVAMLMSDKQKKGVIPLKELRAKLTQMGEK), and 117-152 (LTPEEVDDLLKGVKVGPDGMVKYEEFVRQITLPVPD).

It belongs to the calmodulin family. Associates with the IMAC/intermicrovillar adhesion complex.

The protein localises to the cell projection. The protein resides in the microvillus. As part of the intermicrovillar adhesion complex/IMAC plays a role in epithelial brush border differentiation, controlling microvilli organization and length. Acts as a light chain for MYO7B and is required for efficient targeting of the IMAC to the tips of border brush microvilli. The protein is Calmodulin-like protein 4 (calml4) of Xenopus tropicalis (Western clawed frog).